The sequence spans 729 residues: Neurochondrin (729 aa).

Ser2 carries the N-acetylserine modification. Ser2 bears the Phosphoserine mark. 2 S-palmitoyl cysteine lipidation sites follow: Cys3 and Cys4. Asymmetric dimethylarginine is present on Arg75. A Phosphoserine modification is found at Ser448.

This sequence belongs to the neurochondrin family. Interacts with MCHR1. Interacts with SEMA4C. Interacts with DIAPH1 (via FH3 domain). Interacts with GRM5. Palmitoylated. Palmitoylation by ZDHHC1, ZDHHC3 and ZDHHC11 regulates the association of NCDN with endosome membranes. May also be palmitoylated by ZDHHC7. As to expression, expressed in the neuronal, chondral and bone tissues. Expressed in dendrites. Enriched in the brain in the surface layer I-IV. In brains, protein level increases in male but decreases in female with advancing age (at protein level). In adult brains, it is highly expressed in the forebrain and hindbrain. Highly expressed in the hippocampus, piriform cortex, septum, amygdaloid complex, medial geniculate nucleus, inferior colliculus, cerebellar nuclei and the nuclei of the Vth, VIIth, and XIIth cranial nerves. In bone tissues, it is expressed in osteoblasts and osteocytes.

Its subcellular location is the cytoplasm. The protein resides in the cytosol. It is found in the endosome membrane. It localises to the cell projection. The protein localises to the dendrite. Its subcellular location is the postsynapse. Functionally, probably involved in signal transduction, in the nervous system, via increasing cell surface localization of GRM5 and positively regulating its signaling. Required for the spatial learning process. Acts as a negative regulator of Ca(2+)-calmodulin-dependent protein kinase 2 (CaMK2) phosphorylation. May play a role in modulating melanin-concentrating hormone-mediated functions via its interaction with MCHR1 that interferes with G protein-coupled signal transduction. May be involved in bone metabolism. May also be involved in neurite outgrowth. This Mus musculus (Mouse) protein is Neurochondrin (Ncdn).